The sequence spans 261 residues: Cathepsin G (261 aa).

The first 18 residues, methionine 1–alanine 18, serve as a signal peptide directing secretion. The propeptide at glycine 19–lysine 20 is activation peptide. Positions isoleucine 21 to arginine 25 are important for antimicrobial activity. The region spanning isoleucine 21–arginine 243 is the Peptidase S1 domain. Cysteine 49 and cysteine 65 are joined by a disulfide. Histidine 64 functions as the Charge relay system in the catalytic mechanism. A glycan (N-linked (GlcNAc...) asparagine) is linked at asparagine 71. An important for antimicrobial activity region spans residues histidine 97–leucine 111. Aspartate 108 acts as the Charge relay system in catalysis. 2 disulfide bridges follow: cysteine 142-cysteine 207 and cysteine 172-cysteine 186. The active-site Charge relay system is serine 201.

This sequence belongs to the peptidase S1 family. As to expression, in adult, detected only in bone marrow where expression is restricted to a small population of early myeloid cells.

Its subcellular location is the cell membrane. The protein localises to the cytoplasmic granule. It localises to the secreted. It is found in the cytoplasm. The protein resides in the cytosol. Its subcellular location is the lysosome. The protein localises to the nucleus. The catalysed reaction is Specificity similar to chymotrypsin C.. Inhibited by chymostatin, phenylmethanesulfonyl fluoride and diisopropyl fluorophosphate. Its function is as follows. Serine protease with trypsin- and chymotrypsin-like specificity. Also displays antibacterial activity against Gram-negative and Gram-positive bacteria independent of its protease activity. Prefers Phe and Tyr residues in the P1 position of substrates but also cleaves efficiently after Trp and Leu. Shows a preference for negatively charged amino acids in the P2' position and for aliphatic amino acids both upstream and downstream of the cleavage site. Required for recruitment and activation of platelets which is mediated by the F2RL3/PAR4 platelet receptor. Binds reversibly to and stimulates B cells and CD4(+) and CD8(+) T cells. Also binds reversibly to natural killer (NK) cells and enhances NK cell cytotoxicity through its protease activity. Cleaves complement C3. Cleaves vimentin. Cleaves thrombin receptor F2R/PAR1. Cleaves the synovial mucin-type protein PRG4/lubricin. Cleaves and activates IL36G which promotes expression of chemokines CXCL1 and CXLC8 in keratinocytes. Cleaves IL33 into mature forms which have greater activity than the unprocessed form. Cleaves coagulation factor F8 to produce a partially activated form. Also cleaves and activates coagulation factor F10. Cleaves leukocyte cell surface protein SPN/CD43 to release its extracellular domain and trigger its intramembrane proteolysis by gamma-secretase, releasing the CD43 cytoplasmic tail chain (CD43-ct) which translocates to the nucleus. During apoptosis, cleaves SMARCA2/BRM to produce a 160 kDa cleavage product which localizes to the cytosol. Cleaves MBP in B cell lysosomes at '221-Phe-|-Lys-222', degrading the major immunogenic MBP epitope and preventing the activation of MBP-specific autoreactive T cells. Cleaves annexin ANXA1 and antimicrobial peptide CAMP to produce peptides which act on neutrophil N-formyl peptide receptors to enhance the release of CXCL2. Acts as a ligand for the N-formyl peptide receptor FPR1, enhancing phagocyte chemotaxis. Has antibacterial activity against the Gram-negative bacteria N.gonorrhoeae and P.aeruginosa. Likely to act against N.gonorrhoeae by interacting with N.gonorrhoeae penA/PBP2. Exhibits potent antimicrobial activity against the Gram-positive bacterium L.monocytogenes. Has antibacterial activity against the Gram-positive bacterium S.aureus and degrades S.aureus biofilms, allowing polymorphonuclear leukocytes to penetrate the biofilm and phagocytose bacteria. Has antibacterial activity against M.tuberculosis. Induces platelet aggregation which is strongly potentiated in the presence of ELANE. This Mus musculus (Mouse) protein is Cathepsin G (Ctsg).